Here is a 538-residue protein sequence, read N- to C-terminus: Chaperonin GroEL (538 aa).

ATP-binding positions include Thr-29 to Pro-32, Asp-86 to Thr-90, Gly-413, Asp-479 to Leu-481, and Asp-495.

Belongs to the chaperonin (HSP60) family. Forms a cylinder of 14 subunits composed of two heptameric rings stacked back-to-back. Interacts with the co-chaperonin GroES.

The protein localises to the cytoplasm. The enzyme catalyses ATP + H2O + a folded polypeptide = ADP + phosphate + an unfolded polypeptide.. In terms of biological role, together with its co-chaperonin GroES, plays an essential role in assisting protein folding. The GroEL-GroES system forms a nano-cage that allows encapsulation of the non-native substrate proteins and provides a physical environment optimized to promote and accelerate protein folding. This chain is Chaperonin GroEL, found in Thermotoga maritima (strain ATCC 43589 / DSM 3109 / JCM 10099 / NBRC 100826 / MSB8).